We begin with the raw amino-acid sequence, 365 residues long: MAWRANLACLIKAGGRTRWFPLPEYLSMSPVLHNTCSRRKSTAPEKLAASVAACDTNGKEPGTALGRLYSPEQQASILHVLNTASDKELEAFRLLRGRKSVNIVEHRKKFGPFQSLESLIGVPLIQYKTAVEVCNSILCPENRRRKKSQEKWVLRKFIKPGVEKERLKAVNSIVSIVFGTRRIAWAHLDRKPTVLDWQQAECWKLTNKTYPSSFYLEEISSVVSKIPKADLYILEKSGLSIQNTSLFPILLHFLITEAMLYALLNKTFAKDGQHRVLSINRNAVGKHFDLMIGDTRTSGRELVKQFLSESVLKEQPRVFFPRELAVQYRQKIVKSSHRIEELYDSLLQAVAFYELVFGSGSELKC.

A mitochondrion-targeting transit peptide spans methionine 1 to lysine 40.

This sequence belongs to the TEFM family. In terms of assembly, interacts with POLRMT.

The protein resides in the mitochondrion matrix. The protein localises to the mitochondrion nucleoid. Transcription elongation factor which increases mitochondrial RNA polymerase processivity. Regulates transcription of the mitochondrial genome, including genes important for the oxidative phosphorylation machinery. The polypeptide is Transcription elongation factor, mitochondrial (Tefm) (Rattus norvegicus (Rat)).